Reading from the N-terminus, the 236-residue chain is MLILGLTGSIATGKSTVSREFQEKYHIKIIDADVLARKVVEPNTPCLIKIQKEFGNEVLHEDGTLNRAKLGQAVFQDAGKRSLLNSIIHPAVRLEMLKELLRCYVRGYSIVILDVPLLFEAKMQFICWKTICVSCDKSIQKQRLLARNPELTAEDAENRVQAQMPLELKCQLADIVIENNSDLETLYENIHNVLPLITPSYFFTLLCLILPPLQITLQVIAFVSQKKKVSEFRKHI.

A DPCK domain is found at 3-208 (ILGLTGSIAT…PSYFFTLLCL (206 aa)). 8 to 15 (GSIATGKS) serves as a coordination point for ATP. A phosphoserine mark is found at S82 and S86.

It belongs to the CoaE family.

It localises to the cytoplasm. This is an uncharacterized protein from Schizosaccharomyces pombe (strain 972 / ATCC 24843) (Fission yeast).